The sequence spans 281 residues: NAD-dependent protein deacetylase 3 (281 aa).

The 281-residue stretch at 1–281 folds into the Deacetylase sirtuin-type domain; it reads MLDSPTLDLL…PWLAEQLITR (281 aa). NAD(+) is bound by residues 27–47 and 105–108; these read GAGI…GVRR and QNVD. The Proton acceptor role is filled by His123. Positions 131, 134, 182, and 185 each coordinate Zn(2+). Residues 223–225, 249–251, and Cys267 contribute to the NAD(+) site; these read GTS and NHG.

It belongs to the sirtuin family. Class II subfamily. The cofactor is Zn(2+).

It is found in the cytoplasm. The catalysed reaction is N(6)-acetyl-L-lysyl-[protein] + NAD(+) + H2O = 2''-O-acetyl-ADP-D-ribose + nicotinamide + L-lysyl-[protein]. Functionally, NAD-dependent protein deacetylase which modulates the activities of several enzymes which are inactive in their acetylated form. The chain is NAD-dependent protein deacetylase 3 from Pseudomonas syringae pv. tomato (strain ATCC BAA-871 / DC3000).